Here is a 92-residue protein sequence, read N- to C-terminus: Small ribosomal subunit protein uS19 (92 aa).

The protein belongs to the universal ribosomal protein uS19 family.

Protein S19 forms a complex with S13 that binds strongly to the 16S ribosomal RNA. The sequence is that of Small ribosomal subunit protein uS19 from Albidiferax ferrireducens (strain ATCC BAA-621 / DSM 15236 / T118) (Rhodoferax ferrireducens).